The primary structure comprises 439 residues: GTPase Der (439 aa).

EngA-type G domains lie at 4 to 169 (AMVS…PQEE) and 177 to 352 (IKIA…EEYN). GTP contacts are provided by residues 10-17 (GRPNVGKS), 57-61 (DTGGL), 120-123 (NKVD), 183-190 (GKPNVGKS), 230-234 (DTAGI), and 295-298 (NKWD). The KH-like domain occupies 353–437 (KRITTGLLNN…PVVISTRKRG (85 aa)).

It belongs to the TRAFAC class TrmE-Era-EngA-EngB-Septin-like GTPase superfamily. EngA (Der) GTPase family. In terms of assembly, associates with the 50S ribosomal subunit.

Functionally, GTPase that plays an essential role in the late steps of ribosome biogenesis. The chain is GTPase Der from Thermoanaerobacter pseudethanolicus (strain ATCC 33223 / 39E) (Clostridium thermohydrosulfuricum).